A 121-amino-acid polypeptide reads, in one-letter code: MARIAGVDVPREKRIVISLTYIYGIGKQTASEVLAEAGVSEDTRTRDLTEEELGKIREILDRIKVEGDLRREVNLNIKRLIEIGSYRGMRHRRGLPVRGQNTKNNARTRKGPSKTVAGKKK.

The tract at residues 91-121 is disordered; that stretch reads HRRGLPVRGQNTKNNARTRKGPSKTVAGKKK. Residues 106-121 show a composition bias toward basic residues; it reads ARTRKGPSKTVAGKKK.

It belongs to the universal ribosomal protein uS13 family. Part of the 30S ribosomal subunit. Forms a loose heterodimer with protein S19. Forms two bridges to the 50S subunit in the 70S ribosome.

Functionally, located at the top of the head of the 30S subunit, it contacts several helices of the 16S rRNA. In the 70S ribosome it contacts the 23S rRNA (bridge B1a) and protein L5 of the 50S subunit (bridge B1b), connecting the 2 subunits; these bridges are implicated in subunit movement. Contacts the tRNAs in the A and P-sites. The protein is Small ribosomal subunit protein uS13 of Listeria welshimeri serovar 6b (strain ATCC 35897 / DSM 20650 / CCUG 15529 / CIP 8149 / NCTC 11857 / SLCC 5334 / V8).